The sequence spans 336 residues: Nucleoid-associated protein Spro_3255 (336 aa).

It belongs to the YejK family.

It localises to the cytoplasm. It is found in the nucleoid. The protein is Nucleoid-associated protein Spro_3255 of Serratia proteamaculans (strain 568).